Reading from the N-terminus, the 492-residue chain is Protein PAIR1 (492 aa).

Residues 166 to 186 (VDSVQSDVMQLNRAMKEASLD) are a coiled coil. The Nuclear localization signal motif lies at 479-483 (KRRRR).

In terms of assembly, interacts with CRC1. As to expression, expressed in reproductive organs, but not in vegetative organs.

The protein localises to the nucleus. Functionally, involved in spore formation. Plays an essential role in the establishment of homologous chromosome pairing in early meiosis. This is Protein PAIR1 (PAIR1) from Oryza sativa subsp. japonica (Rice).